The following is a 387-amino-acid chain: Signal-regulatory protein gamma (387 aa).

The N-terminal stretch at 1-28 is a signal peptide; the sequence is MPVPASWPHPPGPFLLLTLLLGLTEVAG. Positions 29 to 137 constitute an Ig-like V-type domain; sequence EEELQMIQPE…ENVEFKSGPG (109 aa). The Extracellular segment spans residues 29–360; it reads EEELQMIQPE…QKDQSSDATP (332 aa). 2 disulfide bridges follow: Cys53–Cys119 and Cys168–Cys226. 2 consecutive Ig-like C1-type domains span residues 146-245 and 252-340; these read PSAP…ANLS and PTLE…LAVS. N-linked (GlcNAc...) asparagine glycosylation is found at Asn243, Asn268, Asn309, and Asn317. Cys271 and Cys329 form a disulfide bridge. The chain crosses the membrane as a helical span at residues 361–383; sequence GPASSLTALLLIAVLLGPIYVPW. Residues 384 to 387 are Cytoplasmic-facing; that stretch reads KQKT.

In terms of assembly, interacts with CD47. Detected in liver, and at very low levels in brain, heart, lung, pancreas, kidney, placenta and skeletal muscle. Expressed on CD4+ T-cells, CD8+ T-cells, CD56-bright natural killer (NK) cells, CD20+ cells, and all activated NK cells. Mainly present in the paracortical T-cell area of lymph nodes, with only sparse positive cells in the mantle and in the germinal center of B-cell follicles. In the thymus, primarily expressed in the medulla on mature T-lymphocytes that have undergone thymic selection.

The protein resides in the membrane. In terms of biological role, probable immunoglobulin-like cell surface receptor. On binding with CD47, mediates cell-cell adhesion. Engagement on T-cells by CD47 on antigen-presenting cells results in enhanced antigen-specific T-cell proliferation and costimulates T-cell activation. This chain is Signal-regulatory protein gamma (SIRPG), found in Homo sapiens (Human).